A 404-amino-acid polypeptide reads, in one-letter code: MSPIIHSLLDTDLYKFTMLQVVLHKFPQTHSVYHFRCRNLEDTVYPLVDILDDLNEQLDHLCNLKYKEDELQYLRKLRFIKSDFVDYLELFQLKRRFIHASIDEEGRLDIRIEGPMVQAMMFEIFVLAIVNELYFSRIKTDEVWAEGERRLQAKLELIQQYEKAQQPNDPPFLVSDFGTRRRYSFEWQKHVVAAFHNTVPNVFRGTSNVLLAKELNITPIGTMAHEFLQAFQALDVRLRDFQKAALETWVQEYRGDLGIALTDVVGMDAFLRDFDLYFAKLFDGLRHDSGDPYEWGDKAYAHYRKLKIDTKTKMLTFSDGLNLPKAWELHQYFKDRFQVSFGIGTNLTNDMGQTPLNIVLKLVECNGQSVAKISDSPGKTMTDNDTFLAYLRQVFQIEELDEAI.

His225 is modified (phosphohistidine; by autocatalysis).

The protein belongs to the NAPRTase family. Post-translationally, transiently phosphorylated on a His residue during the reaction cycle. Phosphorylation strongly increases the affinity for substrates and increases the rate of nicotinate D-ribonucleotide production. Dephosphorylation regenerates the low-affinity form of the enzyme, leading to product release.

The enzyme catalyses nicotinate + 5-phospho-alpha-D-ribose 1-diphosphate + ATP + H2O = nicotinate beta-D-ribonucleotide + ADP + phosphate + diphosphate. The protein operates within cofactor biosynthesis; NAD(+) biosynthesis; nicotinate D-ribonucleotide from nicotinate: step 1/1. Catalyzes the synthesis of beta-nicotinate D-ribonucleotide from nicotinate and 5-phospho-D-ribose 1-phosphate at the expense of ATP. This Acinetobacter baumannii (strain ATCC 17978 / DSM 105126 / CIP 53.77 / LMG 1025 / NCDC KC755 / 5377) protein is Nicotinate phosphoribosyltransferase.